A 123-amino-acid polypeptide reads, in one-letter code: Ribosome-binding factor A (123 aa).

Belongs to the RbfA family. As to quaternary structure, monomer. Binds 30S ribosomal subunits, but not 50S ribosomal subunits or 70S ribosomes.

The protein resides in the cytoplasm. Its function is as follows. One of several proteins that assist in the late maturation steps of the functional core of the 30S ribosomal subunit. Associates with free 30S ribosomal subunits (but not with 30S subunits that are part of 70S ribosomes or polysomes). Required for efficient processing of 16S rRNA. May interact with the 5'-terminal helix region of 16S rRNA. The chain is Ribosome-binding factor A from Dechloromonas aromatica (strain RCB).